Consider the following 372-residue polypeptide: Alanine racemase (372 aa).

Lys33 serves as the catalytic Proton acceptor; specific for D-alanine. Residue Lys33 is modified to N6-(pyridoxal phosphate)lysine. Arg131 contributes to the substrate binding site. Tyr261 acts as the Proton acceptor; specific for L-alanine in catalysis. Met309 lines the substrate pocket.

This sequence belongs to the alanine racemase family. Pyridoxal 5'-phosphate serves as cofactor.

The catalysed reaction is L-alanine = D-alanine. It participates in amino-acid biosynthesis; D-alanine biosynthesis; D-alanine from L-alanine: step 1/1. Catalyzes the interconversion of L-alanine and D-alanine. May also act on other amino acids. The protein is Alanine racemase (alr) of Salinispora tropica (strain ATCC BAA-916 / DSM 44818 / JCM 13857 / NBRC 105044 / CNB-440).